The sequence spans 31 residues: Protamine PTP4 (31 aa).

A disordered region spans residues 1-31; it reads MPRRRRASRRIRRRRRPRVSRRRRGGRRRRR.

Testis.

The protein resides in the nucleus. Its subcellular location is the chromosome. Functionally, protamines substitute for histones in the chromatin of sperm during the haploid phase of spermatogenesis. They compact sperm DNA into a highly condensed, stable and inactive complex. The sequence is that of Protamine PTP4 from Oncorhynchus mykiss (Rainbow trout).